Consider the following 86-residue polypeptide: MDPYKVIIRPVVTEKAISLIEKENKLTFIVDRRATKTDIKKAIEEIFNVKVEKVNTLITPKGEKKAYVKLKPEYSASEIAARLGLF.

This sequence belongs to the universal ribosomal protein uL23 family. Part of the 50S ribosomal subunit. Contacts protein L29.

Its function is as follows. Binds to 23S rRNA. One of the proteins that surrounds the polypeptide exit tunnel on the outside of the ribosome. In Pyrococcus horikoshii (strain ATCC 700860 / DSM 12428 / JCM 9974 / NBRC 100139 / OT-3), this protein is Large ribosomal subunit protein uL23.